The sequence spans 254 residues: Alcohol dehydrogenase (254 aa).

Position 10 to 33 (10 to 33) interacts with NAD(+); sequence FVAGLGGIGLDTSREIVKSGPKNL. Serine 138 contributes to the substrate binding site. The active-site Proton acceptor is the tyrosine 151.

This sequence belongs to the short-chain dehydrogenases/reductases (SDR) family. As to quaternary structure, homodimer.

It carries out the reaction a primary alcohol + NAD(+) = an aldehyde + NADH + H(+). The catalysed reaction is a secondary alcohol + NAD(+) = a ketone + NADH + H(+). The sequence is that of Alcohol dehydrogenase (Adh) from Drosophila heteroneura (Fruit fly).